Consider the following 920-residue polypeptide: 2-oxoadipate dehydrogenase complex component E1 (920 aa).

2 positions are modified to N6-succinyllysine: Lys-183 and Lys-188. Residues 299-318 form a disordered region; sequence GKTRGRQQSQEDGDYSPNGS. Lys-800 and Lys-818 each carry N6-succinyllysine.

It belongs to the alpha-ketoglutarate dehydrogenase family. The 2-oxoadipate dehydrogenase complex is composed of OADH (2-oxoadipate dehydrogenase; E1a), DLST (dihydrolipoamide succinyltransferase; E2) and DLD (dihydrolipoamide dehydrogenase; E3). E1a functional unit is a dimer. Thiamine diphosphate is required as a cofactor.

Its subcellular location is the mitochondrion. The enzyme catalyses N(6)-[(R)-lipoyl]-L-lysyl-[protein] + 2-oxoadipate + H(+) = N(6)-[(R)-S(8)-glutaryldihydrolipoyl]-L-lysyl-[protein] + CO2. Its pathway is amino-acid degradation. Its function is as follows. 2-oxoadipate dehydrogenase (E1a) component of the 2-oxoadipate dehydrogenase complex (OADHC). Participates in the first step, rate limiting for the overall conversion of 2-oxoadipate (alpha-ketoadipate) to glutaryl-CoA and CO(2) catalyzed by the whole OADHC. Catalyzes the irreversible decarboxylation of 2-oxoadipate via the thiamine diphosphate (ThDP) cofactor and subsequent transfer of the decarboxylated acyl intermediate on an oxidized dihydrolipoyl group that is covalently amidated to the E2 enzyme (dihydrolipoyllysine-residue succinyltransferase or DLST). Can catalyze the decarboxylation of 2-oxoglutarate in vitro, but at a much lower rate than 2-oxoadipate. Responsible for the last step of L-lysine, L-hydroxylysine and L-tryptophan catabolism with the common product being 2-oxoadipate. The protein is 2-oxoadipate dehydrogenase complex component E1 (Dhtkd1) of Rattus norvegicus (Rat).